Here is a 484-residue protein sequence, read N- to C-terminus: Probable D-lactate dehydrogenase, mitochondrial (484 aa).

The transit peptide at 1–52 (MAMLLRVATQRLSPWRSFCSRGSQGGLSQDFVEALKAVVGSPHVSTASAVRE) directs the protein to the mitochondrion. An N6-acetyllysine modification is found at lysine 36. Residues 62–242 (RCQPPDAVVW…TSTTLRLHPA (181 aa)) enclose the FAD-binding PCMH-type domain. Lysine 292 is modified (N6-acetyllysine). At lysine 335 the chain carries N6-acetyllysine; alternate. Lysine 335 carries the N6-succinyllysine; alternate modification. Lysine 422 and lysine 449 each carry N6-acetyllysine.

It belongs to the FAD-binding oxidoreductase/transferase type 4 family. Interacts with CSRP3. Requires FAD as cofactor. In terms of tissue distribution, readily detected in liver and kidney, with a weaker signal observed in heart, skeletal muscle, stomach, brain, and lung.

Its subcellular location is the mitochondrion. The enzyme catalyses (R)-lactate + 2 Fe(III)-[cytochrome c] = 2 Fe(II)-[cytochrome c] + pyruvate + 2 H(+). Functionally, involved in D-lactate, but not L-lactate catabolic process. This chain is Probable D-lactate dehydrogenase, mitochondrial, found in Mus musculus (Mouse).